Here is a 271-residue protein sequence, read N- to C-terminus: Short-chain type dehydrogenase/reductase (271 aa).

25-49 (IVTGASRGIGREIALNMAEKGAKVV) contacts NAD(+). Position 166 (S166) interacts with substrate. Y179 (proton acceptor) is an active-site residue.

It belongs to the short-chain dehydrogenases/reductases (SDR) family.

The protein is Short-chain type dehydrogenase/reductase of Picea abies (Norway spruce).